The sequence spans 76 residues: High-potential iron-sulfur protein isozyme 2 (76 aa).

C38, C41, C54, and C70 together coordinate [4Fe-4S] cluster.

The protein belongs to the high-potential iron-sulfur protein (HiPIP) family. As to quaternary structure, homodimer.

Functionally, specific class of high-redox-potential 4Fe-4S ferredoxins. Functions in anaerobic electron transport in most purple and in some other photosynthetic bacteria and in at least one genus (Paracoccus) of halophilic, denitrifying bacteria. This is High-potential iron-sulfur protein isozyme 2 (hip2) from Halorhodospira halophila (Ectothiorhodospira halophila).